The sequence spans 163 residues: Small ribosomal subunit protein uS7 (163 aa).

This sequence belongs to the universal ribosomal protein uS7 family. Part of the 30S ribosomal subunit. Contacts proteins S9 and S11.

Its function is as follows. One of the primary rRNA binding proteins, it binds directly to 16S rRNA where it nucleates assembly of the head domain of the 30S subunit. Is located at the subunit interface close to the decoding center, probably blocks exit of the E-site tRNA. In Rickettsia bellii (strain RML369-C), this protein is Small ribosomal subunit protein uS7.